A 187-amino-acid polypeptide reads, in one-letter code: MTSTPSPSTADPNSTNDWLPVGTLVGAQGLKGELRLNPASDFPERFTEPGTRWLQAKGSAPKEVELLEGRQLPGKSLYVVRLKGVNNRASAEALVGCTVLVPAKDRPELAEGEFHLLDLVGLEARLAGSDEPIGTVSNLISGGNDLLEIKLNSGKTVLVPFVEAIVPDVQLEEGWLLLTPPPGLLEL.

Residues M1 to D17 are compositionally biased toward polar residues. The disordered stretch occupies residues M1 to V21. A PRC barrel domain is found at E111 to L184.

The protein belongs to the RimM family. As to quaternary structure, binds ribosomal protein uS19.

Its subcellular location is the cytoplasm. An accessory protein needed during the final step in the assembly of 30S ribosomal subunit, possibly for assembly of the head region. Essential for efficient processing of 16S rRNA. May be needed both before and after RbfA during the maturation of 16S rRNA. It has affinity for free ribosomal 30S subunits but not for 70S ribosomes. This Synechococcus sp. (strain CC9311) protein is Ribosome maturation factor RimM.